The primary structure comprises 248 residues: 4-hydroxy-tetrahydrodipicolinate reductase (248 aa).

Residues 9-14, 77-79, and 104-107 each bind NAD(+); these read GAKGRV, GTT, and APNF. His134 functions as the Proton donor/acceptor in the catalytic mechanism. Residue His135 participates in (S)-2,3,4,5-tetrahydrodipicolinate binding. Lys138 functions as the Proton donor in the catalytic mechanism. 144–145 is a binding site for (S)-2,3,4,5-tetrahydrodipicolinate; sequence GT.

This sequence belongs to the DapB family.

The protein localises to the cytoplasm. It carries out the reaction (S)-2,3,4,5-tetrahydrodipicolinate + NAD(+) + H2O = (2S,4S)-4-hydroxy-2,3,4,5-tetrahydrodipicolinate + NADH + H(+). The enzyme catalyses (S)-2,3,4,5-tetrahydrodipicolinate + NADP(+) + H2O = (2S,4S)-4-hydroxy-2,3,4,5-tetrahydrodipicolinate + NADPH + H(+). Its pathway is amino-acid biosynthesis; L-lysine biosynthesis via DAP pathway; (S)-tetrahydrodipicolinate from L-aspartate: step 4/4. Catalyzes the conversion of 4-hydroxy-tetrahydrodipicolinate (HTPA) to tetrahydrodipicolinate. This is 4-hydroxy-tetrahydrodipicolinate reductase from Corynebacterium glutamicum (strain R).